A 367-amino-acid polypeptide reads, in one-letter code: Histidinol-phosphate aminotransferase 1 (367 aa).

At Lys229 the chain carries N6-(pyridoxal phosphate)lysine.

This sequence belongs to the class-II pyridoxal-phosphate-dependent aminotransferase family. Histidinol-phosphate aminotransferase subfamily. In terms of assembly, homodimer. Pyridoxal 5'-phosphate serves as cofactor.

The catalysed reaction is L-histidinol phosphate + 2-oxoglutarate = 3-(imidazol-4-yl)-2-oxopropyl phosphate + L-glutamate. It functions in the pathway amino-acid biosynthesis; L-histidine biosynthesis; L-histidine from 5-phospho-alpha-D-ribose 1-diphosphate: step 7/9. The polypeptide is Histidinol-phosphate aminotransferase 1 (hisC1) (Mesorhizobium japonicum (strain LMG 29417 / CECT 9101 / MAFF 303099) (Mesorhizobium loti (strain MAFF 303099))).